Reading from the N-terminus, the 132-residue chain is Small ribosomal subunit protein uS11 (132 aa).

Positions 1 to 16 (MAAGMKGKRSRRRKER) are enriched in basic residues. Residues 1 to 20 (MAAGMKGKRSRRRKERKNVE) form a disordered region.

Belongs to the universal ribosomal protein uS11 family. Part of the 30S ribosomal subunit. Interacts with proteins S7 and S18. Binds to IF-3.

In terms of biological role, located on the platform of the 30S subunit, it bridges several disparate RNA helices of the 16S rRNA. Forms part of the Shine-Dalgarno cleft in the 70S ribosome. This is Small ribosomal subunit protein uS11 from Clostridium botulinum (strain Kyoto / Type A2).